A 343-amino-acid chain; its full sequence is Anthranilate phosphoribosyltransferase (343 aa).

Residues Gly86, 89–90 (GD), Thr94, 96–99 (NIST), 114–122 (KHGNRSASG), and Ser126 each bind 5-phospho-alpha-D-ribose 1-diphosphate. Anthranilate is bound at residue Gly86. Ser98 is a Mg(2+) binding site. Asn117 contributes to the anthranilate binding site. Position 172 (Arg172) interacts with anthranilate. 2 residues coordinate Mg(2+): Asp231 and Glu232.

This sequence belongs to the anthranilate phosphoribosyltransferase family. In terms of assembly, homodimer. It depends on Mg(2+) as a cofactor.

The catalysed reaction is N-(5-phospho-beta-D-ribosyl)anthranilate + diphosphate = 5-phospho-alpha-D-ribose 1-diphosphate + anthranilate. It functions in the pathway amino-acid biosynthesis; L-tryptophan biosynthesis; L-tryptophan from chorismate: step 2/5. Catalyzes the transfer of the phosphoribosyl group of 5-phosphorylribose-1-pyrophosphate (PRPP) to anthranilate to yield N-(5'-phosphoribosyl)-anthranilate (PRA). In Synechococcus sp. (strain JA-2-3B'a(2-13)) (Cyanobacteria bacterium Yellowstone B-Prime), this protein is Anthranilate phosphoribosyltransferase.